Here is a 711-residue protein sequence, read N- to C-terminus: Ribosomal RNA large subunit methyltransferase K/L (711 aa).

Positions 43–154 constitute a THUMP domain; sequence LGYRITLWSR…RGQITIGLNF (112 aa).

Belongs to the methyltransferase superfamily. RlmKL family.

The protein resides in the cytoplasm. The catalysed reaction is guanosine(2445) in 23S rRNA + S-adenosyl-L-methionine = N(2)-methylguanosine(2445) in 23S rRNA + S-adenosyl-L-homocysteine + H(+). It catalyses the reaction guanosine(2069) in 23S rRNA + S-adenosyl-L-methionine = N(2)-methylguanosine(2069) in 23S rRNA + S-adenosyl-L-homocysteine + H(+). Functionally, specifically methylates the guanine in position 2445 (m2G2445) and the guanine in position 2069 (m7G2069) of 23S rRNA. The chain is Ribosomal RNA large subunit methyltransferase K/L from Shewanella sediminis (strain HAW-EB3).